Consider the following 433-residue polypeptide: Tol-Pal system protein TolB (433 aa).

Positions 1 to 21 (MINLFRGLLVVLCFASAMVAA) are cleaved as a signal peptide.

Belongs to the TolB family. In terms of assembly, the Tol-Pal system is composed of five core proteins: the inner membrane proteins TolA, TolQ and TolR, the periplasmic protein TolB and the outer membrane protein Pal. They form a network linking the inner and outer membranes and the peptidoglycan layer.

Its subcellular location is the periplasm. In terms of biological role, part of the Tol-Pal system, which plays a role in outer membrane invagination during cell division and is important for maintaining outer membrane integrity. The sequence is that of Tol-Pal system protein TolB from Pseudomonas syringae pv. tomato (strain ATCC BAA-871 / DC3000).